The following is a 351-amino-acid chain: MVDIRDVEVIAPNFKQRLSGVTSTIIQLVPVQRALGQKIAVLGPGLPKSLPSVRFRDLIHLWKRPEGRPCRVWHARRNVEMLPAILLRDLLRMKLRIVFTSASQRRHTGWSKFLIRRMDAVIATSGRTAAYLDVPNTVILHGIDTKRFQPPFDKTEAKKALGLDPAKKFVGCFGRVRHQKGTDLFVDSMIALLPCRPDWGAIVAGRATGPHLAFESELKERVAKAGLADRILFVGEHTNIPDWYRALDLFVAPQRWEGFGLTPLEAMATGVPVVATDVGAFSELVTGGSEETGLIIAADDLKAMVDAAAAFMDDRPRLAAASANGLARTSKNFAIEQEARAIAAVYESLMR.

It belongs to the glycosyltransferase group 1 family. Glycosyltransferase 4 subfamily.

Its pathway is bacterial outer membrane biogenesis; LPS core biosynthesis. Its function is as follows. Acts at transfer of mannose group to a 3-deoxy-D-mono octulonic acid (KDO) via an alpha-1,5 linkage. The polypeptide is Lipopolysaccharide core biosynthesis mannosyltransferase LpsB (lpsB) (Rhizobium meliloti (strain 1021) (Ensifer meliloti)).